A 299-amino-acid chain; its full sequence is N-acetylaspartate synthetase (299 aa).

Over residues 44-57 (AAPGPAAAPPPAAG) the composition is skewed to pro residues. The tract at residues 44 to 70 (AAPGPAAAPPPAAGPQPHGGTGGAGPP) is disordered. The segment covering 60-70 (PHGGTGGAGPP) has biased composition (gly residues). A helical membrane pass occupies residues 118 to 138 (YALLAALCFAVTRSLLLTCLV). The N-acetyltransferase domain occupies 143–280 (LALRYYYSRK…VLPGMTLSLA (138 aa)).

Belongs to the NAT8 family. As to expression, expressed in brain, kidney, liver and spleen. In brain, present in neurons but not in astrocytes (at protein level). Expressed in brain, thymus and spleen.

It localises to the cytoplasm. Its subcellular location is the microsome membrane. The protein resides in the mitochondrion membrane. The protein localises to the endoplasmic reticulum membrane. It catalyses the reaction L-aspartate + acetyl-CoA = N-acetyl-L-aspartate + CoA + H(+). Its activity is regulated as follows. Aminooxyacetic acid (AOAA) blocks its activity in both cytoplasm and mitochondria. Catalyzes the synthesis of N-acetylaspartate acid (NAA) from L-aspartate and acetyl-CoA. Promotes dopamine uptake by regulating TNF-alpha expression. Attenuates methamphetamine-induced inhibition of dopamine uptake. This is N-acetylaspartate synthetase (Nat8l) from Mus musculus (Mouse).